Consider the following 207-residue polypeptide: Large ribosomal subunit protein uL4 (207 aa).

Residues 53–85 (ERSDVARTGKKFGRQKGGGTARHGDRKAPIFIG) form a disordered region.

Belongs to the universal ribosomal protein uL4 family. As to quaternary structure, part of the 50S ribosomal subunit.

In terms of biological role, one of the primary rRNA binding proteins, this protein initially binds near the 5'-end of the 23S rRNA. It is important during the early stages of 50S assembly. It makes multiple contacts with different domains of the 23S rRNA in the assembled 50S subunit and ribosome. Its function is as follows. Forms part of the polypeptide exit tunnel. The protein is Large ribosomal subunit protein uL4 of Novosphingobium aromaticivorans (strain ATCC 700278 / DSM 12444 / CCUG 56034 / CIP 105152 / NBRC 16084 / F199).